The following is a 131-amino-acid chain: Small ribosomal subunit protein uS11 (131 aa).

Belongs to the universal ribosomal protein uS11 family. As to quaternary structure, part of the 30S ribosomal subunit. Interacts with proteins S7 and S18. Binds to IF-3.

In terms of biological role, located on the platform of the 30S subunit, it bridges several disparate RNA helices of the 16S rRNA. Forms part of the Shine-Dalgarno cleft in the 70S ribosome. The sequence is that of Small ribosomal subunit protein uS11 from Exiguobacterium sp. (strain ATCC BAA-1283 / AT1b).